The following is a 539-amino-acid chain: MTGSKNKARAQAKLEKRASAQARAVAEREAANANRGAGKSRDKGKGKAGSKSDAVAEVKAGSKGKVVAETKEGARPESKALVKGTSDFNHRTENKFARSTRKDKPSSDNWFWAGEDSGINSWFWKGEELSNNSVAKCENKPSTSIQARAEEPAPRTSHKSRSGAEEEEEENVIGNWFWEGDDTGFDTDPKPVFKIVKPQPVDEINEKDRPKDWSEVTIWPKAPAVTPAVLGYRSQDSSEARSSSYIVLASNEEETSTACTKNTRSSLQSIPEYPFGSDPCIQTLDEIRQQIKIREENGIKPFACPCKLECYLDSPEFEKLVNILKSTTDPLIHKIAQIAMGIHKVHPFAQEFINEVGVVTLIESLLSFSSPEVSIKKAVITLNSSGDDRYNKVEFHVKHMCKETVSFPLNSPGQQSGLKIIGQLTTESVHHYIVVSYFSELFHLLSQGNRKTRNLVLKVFLNMSENPKAARDMINMKALAALKLIFNQKEAKANLVSAVAIFINIKEHIRKGSIVVVDHLSYNTLTAIFREVKGIIERM.

Basic residues predominate over residues 1–10 (MTGSKNKARA). 2 disordered regions span residues 1–112 (MTGS…NWFW) and 134–172 (VAKC…EENV). Composition is skewed to basic and acidic residues over residues 66 to 80 (VVAE…ESKA) and 88 to 106 (FNHR…DKPS). The segment covering 134 to 146 (VAKCENKPSTSIQ) has biased composition (polar residues).

Belongs to the GPRASP family. Homodimer.

The protein localises to the cytoplasm. Its subcellular location is the nucleus. Functionally, survival and differentiation promoting protein that plays a role in the regulation of neurosynaptogenesis. Induces phosphatase PP2A activity which results in APP dephosphorylation and inhibits BACE1-mediated processing of APP. The polypeptide is G protein-coupled receptor associated sorting protein 3 (Gprasp3) (Mus musculus (Mouse)).